Here is a 331-residue protein sequence, read N- to C-terminus: MNTEATQDHQEANTTGARLRHAREQLGLSQQAVAERLCLKVSTVRDIEDDKAPADLASTFLRGYIRSYARLVHIPEDELLPMMAKQAPIRAAKVAPMQSFSLGKRRKKRDGWLMSFTWLVLFVVIGLSGAWWWQDHKAQQEEISTMADQSSAELNGGDANSQNVPLDTSAPAAPTADSAANSAPTDTASAPTTSAPAQTPADNNAVVAPSQANVDTAGTTPAAPATTPASPLPTDQANVTTPAASAQDLVMNFSADCWLEVSDATGKKLFSGLQRKGGNLNLSGQAPYKLKIGAPAAVQIQYLGKPVDLSRFIRTNQVARLTLNAESSPAQ.

The Cytoplasmic portion of the chain corresponds to 1–111; sequence MNTEATQDHQ…LGKRRKKRDG (111 aa). Residues 19–71 enclose the HTH cro/C1-type domain; the sequence is LRHAREQLGLSQQAVAERLCLKVSTVRDIEDDKAPADLASTFLRGYIRSYARL. A DNA-binding region (H-T-H motif) is located at residues 30–49; it reads QQAVAERLCLKVSTVRDIED. Residues 112–132 form a helical; Signal-anchor for type II membrane protein membrane-spanning segment; sequence WLMSFTWLVLFVVIGLSGAWW. Residues 133-331 are Periplasmic-facing; that stretch reads WQDHKAQQEE…TLNAESSPAQ (199 aa). A compositionally biased stretch (polar residues) spans 146 to 166; that stretch reads MADQSSAELNGGDANSQNVPL. A disordered region spans residues 146 to 238; it reads MADQSSAELN…ASPLPTDQAN (93 aa). Low complexity-rich tracts occupy residues 167–202 and 216–234; these read DTSA…TPAD and TAGT…PLPT.

It belongs to the RodZ family.

The protein localises to the cell inner membrane. Cytoskeletal protein that is involved in cell-shape control through regulation of the length of the long axis. This is Cytoskeleton protein RodZ from Klebsiella pneumoniae subsp. pneumoniae (strain ATCC 700721 / MGH 78578).